A 453-amino-acid chain; its full sequence is Ribosome biogenesis protein YTM1 (453 aa).

The interval 8–89 (VKLRFFTREQ…ETFLNVEYTR (82 aa)) is ubiquitin-like (UBL) domain. The sufficient for interaction with ERB1 and association with 66S pre-ribosomes stretch occupies residues 99-453 (SFSNEDWVSS…INKGDNIFKS (355 aa)). 7 WD repeats span residues 101–139 (SNEDWVSSLDVGDNNKIISGSYDGVVRTWNLSGKIEKQY), 141–179 (GHSAPIRAVKYISNTRMVSGGNDRTLRLWKTKNEDLKQP), 199–237 (GHKAPVVSIDVSDNSRILSGSYDNTIGFWSTIYKEMTVV), 278–318 (SHTG…CIDT), 320–359 (TTSYSLLSLAQLPTLNLLACGSSARHITLHDPRIGSTSKI), 366–406 (GHKN…PMYT), and 417–453 (GVNDKVFAVNWSKNVGIISAGQDKKIQINKGDNIFKS).

The protein belongs to the WD repeat WDR12/YTM1 family. As to quaternary structure, component of the NOP7 complex, composed of ERB1, NOP7 and YTM1. The complex is held together by ERB1, which interacts with NOP7 via its N-terminal domain and with YTM1 via a high-affinity interaction between the seven-bladed beta-propeller domains of the 2 proteins. The NOP7 complex associates with the 66S pre-ribosome. Interacts (via UBL domain) with MDN1 (via VWFA/MIDAS domain).

The protein resides in the nucleus. The protein localises to the nucleolus. It localises to the nucleoplasm. Functionally, component of the NOP7 complex, which is required for maturation of the 25S and 5.8S ribosomal RNAs and formation of the 60S ribosome. The sequence is that of Ribosome biogenesis protein YTM1 from Vanderwaltozyma polyspora (strain ATCC 22028 / DSM 70294 / BCRC 21397 / CBS 2163 / NBRC 10782 / NRRL Y-8283 / UCD 57-17) (Kluyveromyces polysporus).